The chain runs to 439 residues: Forkhead box protein J1-B (439 aa).

Positions 124-218 (KPPYSYATLI…MNGAMKKRRL (95 aa)) form a DNA-binding region, fork-head.

Belongs to the FOXJ1 family.

The protein localises to the nucleus. In terms of biological role, key transcription factor required for motile ciliogenesis. Activates genes essential for motile cilia formation and function. The polypeptide is Forkhead box protein J1-B (foxj1-b) (Xenopus laevis (African clawed frog)).